A 711-amino-acid polypeptide reads, in one-letter code: Tyrosine-protein phosphatase 2 (711 aa).

Positions 21-130 constitute a Rhodanese domain; it reads TESVSWIIDL…FASSHPDAIV (110 aa). Disordered stretches follow at residues 275 to 306 and 329 to 376; these read APQQTPARPSLRSVPSYPSSNNQRRPSASRVR and IIPR…RANK. 2 stretches are compositionally biased toward polar residues: residues 290-306 and 340-363; these read SYPSSNNQRRPSASRVR and NAQNDGTSTMTSKLKPSVGLSNTR. The 266-residue stretch at 433–698 folds into the Tyrosine-protein phosphatase domain; sequence EMTRSLAFND…KFLYDVVDYL (266 aa). Residue Cys630 is the Phosphocysteine intermediate of the active site.

It belongs to the protein-tyrosine phosphatase family. Non-receptor class subfamily.

It localises to the cytoplasm. The catalysed reaction is O-phospho-L-tyrosyl-[protein] + H2O = L-tyrosyl-[protein] + phosphate. Its function is as follows. Plays a role in inhibiting the onset of mitosis. Dephosphorylates sty1/spc1 and wis1/spc2/sty2. This Schizosaccharomyces pombe (strain 972 / ATCC 24843) (Fission yeast) protein is Tyrosine-protein phosphatase 2 (pyp2).